The sequence spans 352 residues: Ferrochelatase (352 aa).

Fe cation is bound by residues His222 and Glu303.

The protein belongs to the ferrochelatase family.

The protein resides in the cytoplasm. It catalyses the reaction heme b + 2 H(+) = protoporphyrin IX + Fe(2+). It functions in the pathway porphyrin-containing compound metabolism; protoheme biosynthesis; protoheme from protoporphyrin-IX: step 1/1. Its function is as follows. Catalyzes the ferrous insertion into protoporphyrin IX. This chain is Ferrochelatase, found in Brucella canis (strain ATCC 23365 / NCTC 10854 / RM-666).